Reading from the N-terminus, the 202-residue chain is Response regulator RamR (202 aa).

A response regulatory region spans residues 1–121 (MGEMVRIAVV…LITAVHTVAR (121 aa)). The HTH luxR-type domain occupies 135–200 (LKGAEMPLTT…DAIRIVQSAG (66 aa)). The segment at residues 159-178 (IAEIAARLHLSRGTVRNYMA) is a DNA-binding region (H-T-H motif).

In terms of assembly, homodimer, in the absence of phosphorylation. In terms of processing, may be phosphorylated by an unknown kinase, probably on Asp-56.

Its function is as follows. A transcription factor required for aerial hyphae formation on rich medium. Activates transcription of ramC. Might be part of a two-component regulatory system. Binds the promoter of ramC. Non-phosphorylated protein cooperatively binds multiple sites in the ramC promoter. Has not been seen to autophosphorylate using the small molecule phosphodonors phosphoramidate, acetyl phosphate or carbamoyl phosphate. Upon low expression suppresses the bald (bld, no aerial hyphae) phenotype of citA but not bldJ mutants; higher expression also suppresses the bldJ mutant as well as several other bld mutations, inducing SapB production even on media where SapB is normally not produced. Expression of the ram locus (ramA, ramB and ramR) induces rapid aerial mycelium formation in S.lividans. Overexpression suppresses the no aerial hyphae phenotype of a chaplin-negative strain, probably by inducing expression of SapB. Overexpression of RamR show there are about 280 genes having at least a threefold increase or fourfold decrease in RNA abundance versus wild-type including gene cluster SCO4072-SCO4075. This is Response regulator RamR from Streptomyces coelicolor (strain ATCC BAA-471 / A3(2) / M145).